The primary structure comprises 919 residues: MNCEDQAVDLCKAIDLCNVSDNTISHPTPAEEILPRDGLQLMDGDQEEQDAAVLTRLKDVHLKDDALHTKNNGSIAVSADPVNGSAGDLQQSTVEEPLATKCSVGDVGDDGEMDIGVDLSLDENGVLEFEPTAQTQSEESASSCENSLISDTVIELHSQEPLEEHSVDVPSETVPAAATPVVEEAGIKHGLKRVTFPSDEDIVSGAVEPKDPWRHAQNVTVEEILNAYRQACQKLNCKPIPKVLKQTQDLKDLTQRNECLDLKGEKLDYKSCESLEEIFKRVQFKLVDLEQTNLDEDGASALFDMIEYYESATHLNISNNKHIGTRGWQAAAHMMRKTNSLQYLDARNTPLLDHSAPFVARALRISSSLTVLHLENSGISGRPLMLLATALKMNMNLRELYLAENKLNGLQDSAQLGNLLKFNYNIQILDLRNNHILDSGLAYVCEGLKEQRKGLVTLVLWNNQLTHNGMGYLAAALPFTQSLETLNLGHNAVGNEGVHKLKDGLISNRSILRLGLASTKLSCEGAVAIAEFIAESPRLLRLDMRENEIKTGGLMALSLAFKVNTSLLRLDLDREPKKETVKSFIETQRALLADIQNGCKRNFILAREKEETEQKMRLSASMAEIATEDQTHEEEEEEEASPLKKIEEETTDALKDATQESSEVSENQEPKDQESTPQDDSDSDTEDEETPTNTSLTSTSPIPIPAAADTSKTIPSTPPIASPAVISGITVTEASIVTPSSPGRCISVSSPGRGHKIFMVTRVESPPEQQQTSIAMLKSIQPSAITDIKAPSQTQNSTQPTEKSHAEKTPDAQQEDSVSTSTPSLDANIDQTQLTESVSEEEQKKAETLNNEADINEDANTGAPLPNGLKPEFALFEFEGAKPASCIMEHVSVTAELSCGQDLEELLLDASLETSRDAP.

LRR repeat units follow at residues Ser-340 to Arg-361, Ser-368 to Ala-388, Asn-396 to Gly-417, Asn-425 to Cys-445, Gly-454 to Ala-474, and Ser-482 to Lys-502. Disordered stretches follow at residues Ala-626–Ser-716 and Ala-790–Pro-866. Over residues Thr-631 to Ala-640 the composition is skewed to acidic residues. Residues Ser-641–Thr-658 are compositionally biased toward basic and acidic residues. A compositionally biased stretch (acidic residues) spans Pro-677–Thr-690. A compositionally biased stretch (low complexity) spans Pro-691–Pro-701. Polar residues-rich tracts occupy residues Pro-791 to Thr-801 and Asp-811 to Ser-837. A coiled-coil region spans residues Gln-833 to Thr-861.

It belongs to the PPP1R37 family.

May inhibit phosphatase activity of protein phosphatase 1 (PP1) complexes. In Danio rerio (Zebrafish), this protein is Protein phosphatase 1 regulatory subunit 37 (ppp1r37).